The chain runs to 136 residues: 6,7-dimethyl-8-ribityllumazine synthase (136 aa).

5-amino-6-(D-ribitylamino)uracil is bound by residues Phe-11, 43–45, and 67–69; these read SFD and AVI. 72–73 is a (2S)-2-hydroxy-3-oxobutyl phosphate binding site; the sequence is ET. The Proton donor role is filled by His-75. 5-amino-6-(D-ribitylamino)uracil is bound at residue Leu-100. Position 115 (Arg-115) interacts with (2S)-2-hydroxy-3-oxobutyl phosphate.

It belongs to the DMRL synthase family.

The enzyme catalyses (2S)-2-hydroxy-3-oxobutyl phosphate + 5-amino-6-(D-ribitylamino)uracil = 6,7-dimethyl-8-(1-D-ribityl)lumazine + phosphate + 2 H2O + H(+). It participates in cofactor biosynthesis; riboflavin biosynthesis; riboflavin from 2-hydroxy-3-oxobutyl phosphate and 5-amino-6-(D-ribitylamino)uracil: step 1/2. In terms of biological role, catalyzes the formation of 6,7-dimethyl-8-ribityllumazine by condensation of 5-amino-6-(D-ribitylamino)uracil with 3,4-dihydroxy-2-butanone 4-phosphate. This is the penultimate step in the biosynthesis of riboflavin. The polypeptide is 6,7-dimethyl-8-ribityllumazine synthase (Picrophilus torridus (strain ATCC 700027 / DSM 9790 / JCM 10055 / NBRC 100828 / KAW 2/3)).